The chain runs to 172 residues: Protein-export protein SecB (172 aa).

The protein belongs to the SecB family. Homotetramer, a dimer of dimers. One homotetramer interacts with 1 SecA dimer.

It is found in the cytoplasm. Its function is as follows. One of the proteins required for the normal export of preproteins out of the cell cytoplasm. It is a molecular chaperone that binds to a subset of precursor proteins, maintaining them in a translocation-competent state. It also specifically binds to its receptor SecA. In Xylella fastidiosa (strain Temecula1 / ATCC 700964), this protein is Protein-export protein SecB.